An 861-amino-acid chain; its full sequence is Actin-binding LIM protein 1 (861 aa).

LIM zinc-binding domains are found at residues Ile97–Thr156, Thr156–Ser216, Ser224–Val283, and Val283–Glu343. The residue at position 216 (Ser216) is a Phosphoserine. Residues Leu374–His414 are disordered. The segment covering Cys381–Ile400 has biased composition (polar residues). Residues Pro404–Gly413 show a composition bias toward low complexity. Residue Ser411 is modified to Phosphoserine. Residues Tyr417 and Tyr440 each carry the phosphotyrosine modification. Disordered regions lie at residues Glu459–Ala590 and Phe634–Arg682. Phosphoserine occurs at positions 466, 470, and 475. Over residues Leu467–Pro478 the composition is skewed to polar residues. Thr477 bears the Phosphothreonine mark. Ser479 is subject to Phosphoserine. Tyr483 carries the phosphotyrosine modification. Over residues Arg493–Pro518 the composition is skewed to polar residues. 3 positions are modified to phosphoserine: Ser496, Ser499, and Ser502. The segment covering Pro536 to His546 has biased composition (low complexity). Phosphoserine occurs at positions 582 and 671. Residues Arg673 to Ser723 are a coiled coil. A Glycyl lysine isopeptide (Lys-Gly) (interchain with G-Cter in SUMO2) cross-link involves residue Lys704. A disordered region spans residues Glu713 to His748. A phosphoserine mark is found at Ser723, Ser738, Ser760, and Ser789. The segment covering Pro724–Ser738 has biased composition (low complexity). Residues Met793–Phe861 enclose the HP domain.

As to quaternary structure, binds F-actin. Interacts with ABRA. In terms of tissue distribution, isoform 1 is detected in adult retina, where it is highly expressed in the ganglion layer. Detected in rod inner segment. Isoform 2 is highly expressed in adult retina, brain, kidney and heart. Isoform 3 is highly expressed in adult retina, brain, kidney, liver, skeletal muscle, spleen and heart. Detected in embryonic retina, brain, spinal cord, peripheral sensory ganglia and thymus.

The protein resides in the cytoplasm. Its subcellular location is the cytoskeleton. In terms of biological role, may act as scaffold protein. May play a role in the development of the retina. Has been suggested to play a role in axon guidance. The sequence is that of Actin-binding LIM protein 1 (Ablim1) from Mus musculus (Mouse).